The following is a 158-amino-acid chain: MTTFTHINHQGEANMVDVSAKQDTVREARAEAFVRMSPATLEMILSGQHHKGDVFATARIAGIQAAKRTWELIPLCHPLLLSKVEVNLTALPEISSVRVESICKLSGKTGVEMEALTAASIAALTIYDMCKAVQKDIVIEQVRLLEKSGGKSGHFIAE.

Residues leucine 75–histidine 77 and methionine 113–glutamate 114 each bind substrate. Aspartate 128 is a catalytic residue.

This sequence belongs to the MoaC family. Homohexamer; trimer of dimers.

The enzyme catalyses (8S)-3',8-cyclo-7,8-dihydroguanosine 5'-triphosphate = cyclic pyranopterin phosphate + diphosphate. It functions in the pathway cofactor biosynthesis; molybdopterin biosynthesis. Catalyzes the conversion of (8S)-3',8-cyclo-7,8-dihydroguanosine 5'-triphosphate to cyclic pyranopterin monophosphate (cPMP). This chain is Cyclic pyranopterin monophosphate synthase, found in Histophilus somni (strain 129Pt) (Haemophilus somnus).